Here is a 146-residue protein sequence, read N- to C-terminus: Leghemoglobin-3 (146 aa).

One can recognise a Globin domain in the interval G2 to V146. The residue at position 29 (Y29) is a Nitrated tyrosine. S44 provides a ligand contact to heme b. The residue at position 44 (S44) is a Phosphoserine. H61 is a binding site for O2. Residues K64, H93, and K96 each contribute to the heme b site. The residue at position 134 (Y134) is a Nitrated tyrosine.

The protein belongs to the plant globin family. In terms of assembly, monomer. In terms of processing, nitrated in effective nodules and particularly in hypoxic conditions; this mechanism may play a protective role in the symbiosis by buffering toxic peroxynitrite NO(2)(-). Nitration level decrease during nodule senescence. Phosphorylation at Ser-44 disrupts the molecular environment of its porphyrin ring oxygen binding pocket, thus leading to a reduced oxygen consumption and to the delivery of oxygen O(2) to symbiosomes. Root nodules.

The protein localises to the cytoplasm. It localises to the cytosol. Its subcellular location is the nucleus. Functionally, leghemoglobin that reversibly binds oxygen O(2) through a pentacoordinated heme iron. In root nodules, facilitates the diffusion of oxygen to the bacteroids while preventing the bacterial nitrogenase from being inactivated by buffering dioxygen, nitric oxide and carbon monoxide, and promoting the formation of reactive oxygen species (ROS, e.g. H(2)O(2)). This role is essential for symbiotic nitrogen fixation (SNF). The chain is Leghemoglobin-3 from Medicago sativa (Alfalfa).